Consider the following 133-residue polypeptide: MFSSLFLSSALFFFSCLMASSRNLKLSLFSTHSSIEFRLNRRLVFPFEFSCAKTSDSSTRFCTNNSAANAVADIATLDVITYSGSHLAIFFTLDIGKTGAFSLTKLDIFFATRLTLACFYLLGQAVVKAINFA.

This is an uncharacterized protein from Saccharomyces cerevisiae (strain ATCC 204508 / S288c) (Baker's yeast).